The following is a 331-amino-acid chain: Glyceraldehyde-3-phosphate dehydrogenase (331 aa).

NAD(+)-binding positions include 12–13 (RI), Asp34, Arg78, and Thr120. Residues 149–151 (SCT), Thr180, 209–210 (TG), and Arg232 contribute to the D-glyceraldehyde 3-phosphate site. Cys150 acts as the Nucleophile in catalysis. Asn314 is a binding site for NAD(+).

This sequence belongs to the glyceraldehyde-3-phosphate dehydrogenase family. As to quaternary structure, homotetramer.

It localises to the cytoplasm. It catalyses the reaction D-glyceraldehyde 3-phosphate + phosphate + NAD(+) = (2R)-3-phospho-glyceroyl phosphate + NADH + H(+). It participates in carbohydrate degradation; glycolysis; pyruvate from D-glyceraldehyde 3-phosphate: step 1/5. In terms of biological role, catalyzes the oxidative phosphorylation of glyceraldehyde 3-phosphate (G3P) to 1,3-bisphosphoglycerate (BPG) using the cofactor NAD. The first reaction step involves the formation of a hemiacetal intermediate between G3P and a cysteine residue, and this hemiacetal intermediate is then oxidized to a thioester, with concomitant reduction of NAD to NADH. The reduced NADH is then exchanged with the second NAD, and the thioester is attacked by a nucleophilic inorganic phosphate to produce BPG. The polypeptide is Glyceraldehyde-3-phosphate dehydrogenase (gapA) (Escherichia fergusonii (strain ATCC 35469 / DSM 13698 / CCUG 18766 / IAM 14443 / JCM 21226 / LMG 7866 / NBRC 102419 / NCTC 12128 / CDC 0568-73)).